Reading from the N-terminus, the 69-residue chain is MIIVIIFLVIYFNNQLYMCVSSTCVIQWCAIQCKRKEANGIGTCKPRPNQGKIQYRKLKEECHCVYKCS.

The signal sequence occupies residues 1–15; sequence MIIVIIFLVIYFNNQ. Intrachain disulfides connect Cys19/Cys68, Cys24/Cys44, Cys29/Cys62, and Cys33/Cys64.

The protein belongs to the DEFL family.

The protein resides in the secreted. The chain is Defensin-like protein 166 from Arabidopsis thaliana (Mouse-ear cress).